The sequence spans 261 residues: Phosphoadenosine phosphosulfate reductase (261 aa).

The protein belongs to the PAPS reductase family. CysH subfamily.

The enzyme catalyses [thioredoxin]-disulfide + sulfite + adenosine 3',5'-bisphosphate + 2 H(+) = [thioredoxin]-dithiol + 3'-phosphoadenylyl sulfate. It participates in sulfur metabolism; hydrogen sulfide biosynthesis; sulfite from sulfate: step 3/3. Functionally, the NADP dependent reduction of PAPS into sulfite involves thioredoxin which probably plays the role of a thiol carrier. This Saccharomyces cerevisiae (strain ATCC 204508 / S288c) (Baker's yeast) protein is Phosphoadenosine phosphosulfate reductase (MET16).